Here is a 184-residue protein sequence, read N- to C-terminus: ATP synthase subunit b, chloroplastic (184 aa).

The helical transmembrane segment at 27 to 49 (LATNPINLSVVLGVLIFFGKGVL) threads the bilayer.

Belongs to the ATPase B chain family. As to quaternary structure, F-type ATPases have 2 components, F(1) - the catalytic core - and F(0) - the membrane proton channel. F(1) has five subunits: alpha(3), beta(3), gamma(1), delta(1), epsilon(1). F(0) has four main subunits: a(1), b(1), b'(1) and c(10-14). The alpha and beta chains form an alternating ring which encloses part of the gamma chain. F(1) is attached to F(0) by a central stalk formed by the gamma and epsilon chains, while a peripheral stalk is formed by the delta, b and b' chains.

The protein localises to the plastid. It localises to the chloroplast thylakoid membrane. Its function is as follows. F(1)F(0) ATP synthase produces ATP from ADP in the presence of a proton or sodium gradient. F-type ATPases consist of two structural domains, F(1) containing the extramembraneous catalytic core and F(0) containing the membrane proton channel, linked together by a central stalk and a peripheral stalk. During catalysis, ATP synthesis in the catalytic domain of F(1) is coupled via a rotary mechanism of the central stalk subunits to proton translocation. In terms of biological role, component of the F(0) channel, it forms part of the peripheral stalk, linking F(1) to F(0). In Morus indica (Mulberry), this protein is ATP synthase subunit b, chloroplastic.